The primary structure comprises 125 residues: MAKYLAQIIVMGVQVVGRAFARALRQEFAASQAAADARGRAGHQSAAASNLSGLSLQEAQQILNVSKLSPEEVQKNYEHLFKVNDKSVGGSFYLQSKVVRAKERLDEELRIQAQEDREKGQKPKT.

Positions 58–110 are J-like; the sequence is EAQQILNVSKLSPEEVQKNYEHLFKVNDKSVGGSFYLQSKVVRAKERLDEELR. At Ser69 the chain carries Phosphoserine.

It belongs to the TIM16/PAM16 family. Probable component of the PAM complex at least composed of a mitochondrial HSP70 protein, GRPEL1 or GRPEL2, TIMM44, TIMM16/PAM16 and TIMM14/DNAJC19. Interacts with DNAJC19. Directly interacts with DNAJC15; this interaction counteracts DNAJC15-dependent stimulation of HSPA9 ATPase activity. Associates with the TIM23 complex. Expressed in trabecular bone and cartilage and by differentiated chondrocytes localized in the hypertrophic zone and by osteoblasts at early developmental stages.

Its subcellular location is the mitochondrion inner membrane. Regulates ATP-dependent protein translocation into the mitochondrial matrix. Inhibits DNAJC19 stimulation of HSPA9/Mortalin ATPase activity. The polypeptide is Mitochondrial import inner membrane translocase subunit TIM16 (Mus musculus (Mouse)).